The primary structure comprises 1175 residues: Major DNA-binding protein (1175 aa).

A zinc finger spans residues C496–H509. Positions F825–W826 match the Required for filament formation motif. The required for nuclear localization stretch occupies residues K1151–L1175.

It belongs to the herpesviridae major DNA-binding protein family. Homooligomers. Forms double-helical filaments necessary for the formation of replication compartments within the host nucleus. Interacts with the origin-binding protein. Interacts with the helicase primase complex; this interaction stimulates primer synthesis activity of the helicase-primase complex. Interacts with the DNA polymerase. Interacts with the alkaline exonuclease; this interaction increases its nuclease processivity.

It localises to the host nucleus. Functionally, plays several crucial roles in viral infection. Participates in the opening of the viral DNA origin to initiate replication by interacting with the origin-binding protein. May disrupt loops, hairpins and other secondary structures present on ssDNA to reduce and eliminate pausing of viral DNA polymerase at specific sites during elongation. Promotes viral DNA recombination by performing strand-transfer, characterized by the ability to transfer a DNA strand from a linear duplex to a complementary single-stranded DNA circle. Can also catalyze the renaturation of complementary single strands. Additionally, reorganizes the host cell nucleus, leading to the formation of prereplicative sites and replication compartments. This process is driven by the protein which can form double-helical filaments in the absence of DNA. In Suid herpesvirus 1 (SuHV-1), this protein is Major DNA-binding protein.